Reading from the N-terminus, the 391-residue chain is MPGNSFGKLFRITTFGESHGPAVGVVIDGVPAGLPLTVEDIKFELEFRRPGRLYVSGRREKDEPEILSGIFNNRTTGSPIAVIVRNTDVISSFYDEIKYKPRPGHADLPFIMKYGYENWDYRGGGRASARETVSRVIAGAVAKKLLMLTDTWIAGHLRSLGPEELSEEVTFEEVLCSKYSPVRASKKDLEEKYEALIKKATQEGDSYGGIAEVIAKNPPIGLGEPVFDKMKAELAKAIMSIPAVMGFEYGLGFIASKMKGSEANDEIIRKNNRIGWKYNYAGGILGGLTNGEDLIVRCAFKPTSSIRKPQKTIDLRNLEESYISVIGRHDPAVAIRGVTVVESMVALTIVDHAMRAGAIPLVKLTEDQANTIQQRWERYVKSCKPMEESQS.

Arg-48 provides a ligand contact to NADP(+). Residues 126-128 (RAS), Gly-286, 301-305 (KPTSS), and Arg-328 contribute to the FMN site.

The protein belongs to the chorismate synthase family. FMNH2 is required as a cofactor.

It catalyses the reaction 5-O-(1-carboxyvinyl)-3-phosphoshikimate = chorismate + phosphate. It participates in metabolic intermediate biosynthesis; chorismate biosynthesis; chorismate from D-erythrose 4-phosphate and phosphoenolpyruvate: step 7/7. Its function is as follows. Catalyzes the anti-1,4-elimination of the C-3 phosphate and the C-6 proR hydrogen from 5-enolpyruvylshikimate-3-phosphate (EPSP) to yield chorismate, which is the branch point compound that serves as the starting substrate for the three terminal pathways of aromatic amino acid biosynthesis. This reaction introduces a second double bond into the aromatic ring system. This Saccharolobus solfataricus (strain ATCC 35092 / DSM 1617 / JCM 11322 / P2) (Sulfolobus solfataricus) protein is Chorismate synthase.